The primary structure comprises 511 residues: Maturase K (511 aa).

It belongs to the intron maturase 2 family. MatK subfamily.

The protein resides in the plastid. It is found in the chloroplast. Functionally, usually encoded in the trnK tRNA gene intron. Probably assists in splicing its own and other chloroplast group II introns. The chain is Maturase K from Bowiea volubilis (Climbing onion).